Consider the following 479-residue polypeptide: MSKKLYIKTWGCQMNEYDSTKMAELLHSTHGYDVAEEAEDADLILLNTCSIREKAQEKVFHQLGRWKNLKKNNPNLLIGVGGCVASQEGNEIRARAPFVDIIFGPQTLHRLPEMVNQVSETHAPMVDVSFPEIEKFDRLAEPKADGASAFVSIMEGCSKYCSFCVVPYTRGEEVSRPVDDVIYEIAQLAEQGVREVNLLGQNVNAYRGEHYDGEVCRFAELLHLVAAIDGIDRIRYTTSHPVEFTDDITEAYKTIPELVSHLHLPVQSGSDRILTMMKRGHTALEYKSKIRALKKARPDIAMSSDFIIGFPGESDADFEATMDLIQSIDFDMSFSFIYSARPGTPAADLPDDISEETKKKRLQLLQQRLNQQSMAHARRMLETEQRILVTGPSKKNPMELTGRTENNRVVNFVGQPHMIGQFVDVRITEVLPNSLRGELIREEADMGLRVDTAPEIILQRGKSSEPDELGVVRMPRQAS.

The 118-residue stretch at 3-120 (KKLYIKTWGC…LPEMVNQVSE (118 aa)) folds into the MTTase N-terminal domain. [4Fe-4S] cluster contacts are provided by C12, C49, C83, C157, C161, and C164. One can recognise a Radical SAM core domain in the interval 143-375 (KADGASAFVS…QQRLNQQSMA (233 aa)). Positions 378-441 (RRMLETEQRI…PNSLRGELIR (64 aa)) constitute a TRAM domain.

It belongs to the methylthiotransferase family. MiaB subfamily. In terms of assembly, monomer. Requires [4Fe-4S] cluster as cofactor.

The protein localises to the cytoplasm. The catalysed reaction is N(6)-dimethylallyladenosine(37) in tRNA + (sulfur carrier)-SH + AH2 + 2 S-adenosyl-L-methionine = 2-methylsulfanyl-N(6)-dimethylallyladenosine(37) in tRNA + (sulfur carrier)-H + 5'-deoxyadenosine + L-methionine + A + S-adenosyl-L-homocysteine + 2 H(+). Catalyzes the methylthiolation of N6-(dimethylallyl)adenosine (i(6)A), leading to the formation of 2-methylthio-N6-(dimethylallyl)adenosine (ms(2)i(6)A) at position 37 in tRNAs that read codons beginning with uridine. In Idiomarina loihiensis (strain ATCC BAA-735 / DSM 15497 / L2-TR), this protein is tRNA-2-methylthio-N(6)-dimethylallyladenosine synthase.